The chain runs to 121 residues: Aspartate 1-decarboxylase (121 aa).

The active-site Schiff-base intermediate with substrate; via pyruvic acid is the serine 25. Serine 25 bears the Pyruvic acid (Ser) mark. Residue threonine 57 coordinates substrate. Tyrosine 58 serves as the catalytic Proton donor. 73-75 lines the substrate pocket; sequence GAA.

This sequence belongs to the PanD family. Heterooctamer of four alpha and four beta subunits. The cofactor is pyruvate. Is synthesized initially as an inactive proenzyme, which is activated by self-cleavage at a specific serine bond to produce a beta-subunit with a hydroxyl group at its C-terminus and an alpha-subunit with a pyruvoyl group at its N-terminus.

It is found in the cytoplasm. It carries out the reaction L-aspartate + H(+) = beta-alanine + CO2. The protein operates within cofactor biosynthesis; (R)-pantothenate biosynthesis; beta-alanine from L-aspartate: step 1/1. In terms of biological role, catalyzes the pyruvoyl-dependent decarboxylation of aspartate to produce beta-alanine. The protein is Aspartate 1-decarboxylase of Maricaulis maris (strain MCS10) (Caulobacter maris).